A 265-amino-acid chain; its full sequence is Putative hydro-lyase PA2116 (265 aa).

This sequence belongs to the D-glutamate cyclase family.

The chain is Putative hydro-lyase PA2116 from Pseudomonas aeruginosa (strain ATCC 15692 / DSM 22644 / CIP 104116 / JCM 14847 / LMG 12228 / 1C / PRS 101 / PAO1).